We begin with the raw amino-acid sequence, 1336 residues long: MEAALSRKTAKKKRKTHTTRGYRKREQEVQKLIRATEGRISGPEHDMEALSLQFFHGFEGEMQQENDFAVEDCQESDEDSGGELAEEPTDSPSQTFIHIDLHDPPLAWGQLFKQRHYYDESLLYRPSNTLHFQLHLSDLSELKDSQIRMLNRYQEQSKSKSGKLGSDLIGQLSGQKPASFLMGKHLYRSVCHRRFQSVFFPPMPPSELKGLPSRRCLKLCLKQLRFSLHPQLLEEHRLAQQLEDLFDVYSQQRKQRICRKLREELEIARQVALKLLASAGQDQTAEVKRQLKLTRQLRQRYYAESAAQRNLLQRLLKEWAKLKELRRQQRFQCTRFQLGLRVVHPPDLEASYCAWKESFETDLAEVYREHLELFYTRLRLWTDQKSHSRTATGHSKPPRKPQFDRIMASLRKEYDKTFKDPEEPYVEVFRLHADEATARLSIPGGDQLPKARNYFLKIFLDGQFVGQSRTYRLEPDLQISINECIGVLLERSLPENLNIWLYEKSTLTPKSRRLAQISTPLVLSSKDDAVQEKLSFQALSSTQLAGDVYLYYEYRSTEGWGSALHLDDVQRLPDALRQTLLPQSLPALPQASKELVTPRPPSGRIKKSQLPSLIFAEQQLQFCGLDVLLDNRRFQLLHSRHQQRNLHTKQLRFVPALEQEISEEEPLPDGRGTVQLLEPGTYWNPIDLHKHRGRKFLQLLYEVIASQSARRAKALQTPLPLLLLAEDSDRSSGTGWTALWRAFCSVFQGQRNSLPREPSGWSGHQSAPDLFKSFCVSLHVVRATGVPVRSRHILNLNERRSSAGGDMSTSLFVTQTLMYSNVRPFVTLSYGQRLCRSRTAEGSNPTWNEQLQLQIQSQFGDLRDDLKISLFDELIEQQYSDEASDVYQRVQCNWLGEFRVPINSLLASRTFEGCIELAMPKVLVGYKRPLIDSVTNMPTDQYPEFKEAVHLWFYLSIEPGGGDLAPLHSCALACAEKPELQQYLDERRLELQQLLPQPQRYVEPLVCTAQGKRVCLTRLMDPVPLPPAAVPSGENPLEICIRYVSLLSHLRSYDPCQGFRGVWLDNQSLLDSTWCSVKDLGVLLCNYMLSLGLECWLILGVSCPHGECSFVLFRQPETAELFLVSPATGKRYQLQDVHCPLRRIYCVVGKQNIYFNIQTETRVSMTHFNLQDGACWFPLFRRRVPAPQSGVQKLDYAYKRSYELSQLQKHIERKIMKKISAWRTTRKTIWNRAFQPRLHKILCDMEDLSTFSRGRYDEPIFSEQLEREFPNYRLYGFTLNFAYTNLAAISERIRTSCIHYNHDASVEFCVAVHLHAHANDVLSVWLFLLSMVPLVE.

2 disordered regions span residues 1–29 (MEAA…EQEV) and 70–97 (VEDC…QTFI). Basic residues predominate over residues 8–23 (KTAKKKRKTHTTRGYR). Residues 70–89 (VEDCQESDEDSGGELAEEPT) are compositionally biased toward acidic residues. Residues 136-156 (LSDLSELKDSQIRMLNRYQEQ) adopt a coiled-coil conformation. In terms of domain architecture, C2 spans 755–915 (PREPSGWSGH…LASRTFEGCI (161 aa)).

As to quaternary structure, probable component of the tectonic-like complex (also named MKS complex), composed of B9d1, B9d2, Cc2d2a, Mks1 and tctn. As to expression, expressed in the antennae of chordotonal neurons and male germ cells (at protein level).

It localises to the cytoplasm. Its subcellular location is the cytoskeleton. It is found in the cilium basal body. The protein localises to the microtubule organizing center. The protein resides in the centrosome. It localises to the centriole. Its function is as follows. Probable component of the tectonic-like complex (also named MKS complex), a complex localized at the transition zone of primary cilia. Required for ciliary structure and function. This Drosophila melanogaster (Fruit fly) protein is Coiled-coil and C2 domain-containing protein 2A.